A 227-amino-acid polypeptide reads, in one-letter code: Urease accessory protein UreF (227 aa).

It belongs to the UreF family. UreD, UreF and UreG form a complex that acts as a GTP-hydrolysis-dependent molecular chaperone, activating the urease apoprotein by helping to assemble the nickel containing metallocenter of UreC. The UreE protein probably delivers the nickel.

It localises to the cytoplasm. Its function is as follows. Required for maturation of urease via the functional incorporation of the urease nickel metallocenter. The chain is Urease accessory protein UreF from Methylobacillus flagellatus (strain ATCC 51484 / DSM 6875 / VKM B-1610 / KT).